A 799-amino-acid chain; its full sequence is Phenylalanine--tRNA ligase beta subunit (799 aa).

The tRNA-binding domain maps to 39-150 (GKGFSGVIVG…EHLQAGTALN (112 aa)). Residues 402–478 (FLELTIRCRL…RIYGYDHIPR (77 aa)) form the B5 domain. Mg(2+)-binding residues include aspartate 456, aspartate 462, glutamate 465, and glutamate 466. The FDX-ACB domain maps to 705-798 (AIYPGSERDW…VSQKFANDLK (94 aa)).

This sequence belongs to the phenylalanyl-tRNA synthetase beta subunit family. Type 1 subfamily. Tetramer of two alpha and two beta subunits. Requires Mg(2+) as cofactor.

The protein localises to the cytoplasm. The catalysed reaction is tRNA(Phe) + L-phenylalanine + ATP = L-phenylalanyl-tRNA(Phe) + AMP + diphosphate + H(+). The protein is Phenylalanine--tRNA ligase beta subunit of Protochlamydia amoebophila (strain UWE25).